A 144-amino-acid chain; its full sequence is Large ribosomal subunit protein uL16 (144 aa).

Residues 1–16 are compositionally biased toward basic residues; that stretch reads MLVPKRVKHRKVQRGK. Positions 1–20 are disordered; that stretch reads MLVPKRVKHRKVQRGKMRGE.

Belongs to the universal ribosomal protein uL16 family. Part of the 50S ribosomal subunit.

Functionally, binds 23S rRNA and is also seen to make contacts with the A and possibly P site tRNAs. The protein is Large ribosomal subunit protein uL16 of Limosilactobacillus fermentum (strain NBRC 3956 / LMG 18251) (Lactobacillus fermentum).